Here is a 365-residue protein sequence, read N- to C-terminus: Histidinol-phosphate aminotransferase (365 aa).

The residue at position 221 (lysine 221) is an N6-(pyridoxal phosphate)lysine.

This sequence belongs to the class-II pyridoxal-phosphate-dependent aminotransferase family. Histidinol-phosphate aminotransferase subfamily. As to quaternary structure, homodimer. The cofactor is pyridoxal 5'-phosphate.

The catalysed reaction is L-histidinol phosphate + 2-oxoglutarate = 3-(imidazol-4-yl)-2-oxopropyl phosphate + L-glutamate. It functions in the pathway amino-acid biosynthesis; L-histidine biosynthesis; L-histidine from 5-phospho-alpha-D-ribose 1-diphosphate: step 7/9. This is Histidinol-phosphate aminotransferase from Rhodopseudomonas palustris (strain HaA2).